A 464-amino-acid polypeptide reads, in one-letter code: Properdin (464 aa).

An N-terminal signal peptide occupies residues 1-22 (MPAEMQAPQWLLLLLVILPATG). TSP type-1 domains follow at residues 24–72 (DPVL…QACR), 73–130 (SPQW…PCCP), 132–187 (MGGW…KTCP), 189–251 (HGAW…PPCP), 253–309 (AGGW…VPCP), 311–372 (NGEW…HNCI), and 374–457 (KGSW…PVCK). 3 disulfide bridges follow: C28–C52, C39–C68, and C53–C71. C-linked (Man) tryptophan glycosylation is found at W79 and W82. 7 cysteine pairs are disulfide-bonded: C85/C123, C89/C129, C100/C107, C128/C166, C144/C180, C148/C186, and C159/C170. Residues W135, W138, and W141 are each glycosylated (C-linked (Man) tryptophan). O-linked (Fuc...) threonine glycosylation is present at T147. W192, W195, and W198 each carry a C-linked (Man) tryptophan glycan. Disulfide bonds link C201/C244, C205/C250, and C220/C234. O-linked (Fuc...) serine glycosylation is present at S204. Residues W256 and W259 are each glycosylated (C-linked (Man) tryptophan). Disulfide bonds link C265–C302, C269–C308, and C280–C292. T268 carries an O-linked (Fuc...) threonine glycan. C-linked (Man) tryptophan glycosylation is found at W317 and W320. 3 cysteine pairs are disulfide-bonded: C323/C365, C332/C371, and C345/C355. Residues 346–354 (GGRKFNGKP) form an interaction with Complement C3 beta chain region. Residues W377, W380, and W383 are each glycosylated (C-linked (Man) tryptophan). 3 cysteine pairs are disulfide-bonded: C386/C450, C390/C456, and C402/C434. Residue N423 is glycosylated (N-linked (GlcNAc...) asparagine).

As to quaternary structure, in plasma, properdin exists as dimers, trimers or tetramers in the relative proportions of 26:54:20. Interacts with the pro-C3-convertase enzyme complex (C3b-Bb) comprised of Complement C3 beta chain (C3b) and the Complement factor B Bb fragment (Bb), where it binds (via its TSP type-1 5 domain) with C3b and Bb. This interaction stabilizes the complex and allows it to become the active C3-convertase enzyme complex (C3b-Bb-FP). Interacts with C3b. Interacts with CFB.

It is found in the secreted. Functionally, a positive regulator of the alternate pathway of complement. It binds to and stabilizes the C3- and C5-convertase enzyme complexes. Inhibits CFI-CFH mediated degradation of Inhibits CFI-CFH mediated degradation of Complement C3 beta chain (C3b). This chain is Properdin (Cfp), found in Mus musculus (Mouse).